A 106-amino-acid polypeptide reads, in one-letter code: Nucleoid-associated protein MCCL_1934 (106 aa).

Residues 1–34 form a disordered region; that stretch reads MRGGGNMQQMMKQMQKMQKKMAEEQEKLKEERIE. Over residues 7–16 the composition is skewed to low complexity; it reads MQQMMKQMQK. A compositionally biased stretch (basic and acidic residues) spans 20–34; it reads KMAEEQEKLKEERIE.

Belongs to the YbaB/EbfC family. Homodimer.

The protein localises to the cytoplasm. Its subcellular location is the nucleoid. Binds to DNA and alters its conformation. May be involved in regulation of gene expression, nucleoid organization and DNA protection. The polypeptide is Nucleoid-associated protein MCCL_1934 (Macrococcus caseolyticus (strain JCSC5402) (Macrococcoides caseolyticum)).